The primary structure comprises 389 residues: Large envelope protein (389 aa).

Methionine 1 carries the post-translational modification N-acetylmethionine. Glycine 2 carries N-myristoyl glycine; by host lipidation. Residues 2–108 (GTNLSVPNPL…PPLRDSHPQA (107 aa)) are pre-S1. The pre-S stretch occupies residues 2 to 163 (GTNLSVPNPL…FSRTGDPAPN (162 aa)). The Virion surface; in external conformation segment spans residues 2–170 (GTNLSVPNPL…APNMESTTSG (169 aa)). Topologically, residues 2–242 (GTNLSVPNPL…PGYRWMCLRR (241 aa)) are intravirion; in internal conformation. Positions 74–105 (LTTVPAAPPPASTNRQSGRQPTPISPPLRDSH) are disordered. The span at 85–95 (STNRQSGRQPT) shows a compositional bias: polar residues. The interval 109–163 (MQWNSTTFHQALLDPRVRGLYFPAGGSSSGTVNPVPTIVSPISSIFSRTGDPAPN) is pre-S2. Residues 171 to 191 (FLGPLLVLQAGFFLLTRILTI) form a helical membrane-spanning segment. Residues 192 to 242 (PQSLDSWWTSLNFLGEAPTCPGQNSQSPTSNHSPTSCPPICPGYRWMCLRR) lie on the Intravirion; in external conformation side of the membrane. Residues 243–263 (FIIFLFILLLCLIFLLVLLDY) form a helical membrane-spanning segment. Over 264–337 (QGMLPVCPLL…WASVRFSWLS (74 aa)) the chain is Virion surface. An N-linked (GlcNAc...) asparagine; by host glycan is attached at asparagine 309. Residues 338–358 (LLVPFVQWFAGLSPTVWLSVI) form a helical membrane-spanning segment. The Intravirion segment spans residues 359–364 (WMMWYW). Residues 365-387 (GPSLYNILSPFLPLLPIFFCLWV) traverse the membrane as a helical segment. Topologically, residues 388–389 (YI) are virion surface.

It belongs to the orthohepadnavirus major surface antigen family. As to quaternary structure, in its internal form (Li-HBsAg), interacts with the capsid protein and with the isoform S. Interacts with host chaperone CANX. Associates with host chaperone CANX through its pre-S2 N glycan; this association may be essential for isoform M proper secretion. In terms of assembly, interacts with isoform L. Interacts with the antigens of satellite virus HDV (HDVAgs); this interaction is required for encapsidation of HDV genomic RNA. Post-translationally, isoform M is N-terminally acetylated by host at a ratio of 90%, and N-glycosylated by host at the pre-S2 region. Myristoylated.

It localises to the virion membrane. Its function is as follows. The large envelope protein exists in two topological conformations, one which is termed 'external' or Le-HBsAg and the other 'internal' or Li-HBsAg. In its external conformation the protein attaches the virus to cell receptors and thereby initiating infection. This interaction determines the species specificity and liver tropism. This attachment induces virion internalization predominantly through caveolin-mediated endocytosis. The large envelope protein also assures fusion between virion membrane and endosomal membrane. In its internal conformation the protein plays a role in virion morphogenesis and mediates the contact with the nucleocapsid like a matrix protein. Functionally, the middle envelope protein plays an important role in the budding of the virion. It is involved in the induction of budding in a nucleocapsid independent way. In this process the majority of envelope proteins bud to form subviral lipoprotein particles of 22 nm of diameter that do not contain a nucleocapsid. In Hepatitis B virus genotype C subtype adr (isolate Japan/A4/1994) (HBV-C), this protein is Large envelope protein.